The following is a 519-amino-acid chain: Arabinose import ATP-binding protein AraG 2 (519 aa).

ABC transporter domains lie at 29–264 (LSLD…MVGR) and 264–515 (RSIE…LIKL). Position 61–68 (61–68 (GENGAGKS)) interacts with ATP.

The protein belongs to the ABC transporter superfamily. Arabinose importer (TC 3.A.1.2.2) family. The complex is composed of two ATP-binding proteins (AraG), two transmembrane proteins (AraH) and a solute-binding protein (AraF).

It localises to the cell inner membrane. The enzyme catalyses L-arabinose(out) + ATP + H2O = L-arabinose(in) + ADP + phosphate + H(+). Part of the ABC transporter complex AraFGH involved in arabinose import. Responsible for energy coupling to the transport system. In Burkholderia ambifaria (strain ATCC BAA-244 / DSM 16087 / CCUG 44356 / LMG 19182 / AMMD) (Burkholderia cepacia (strain AMMD)), this protein is Arabinose import ATP-binding protein AraG 2.